The chain runs to 1344 residues: Protein stu1 (1344 aa).

Residues 93–131 form an HEAT 1 repeat; the sequence is LYPLLVERLGDHKERIRAQAAQSFTDMWLAAPEEVEQCV. Residues 265-292 form a disordered region; sequence HRPVSRAETQASRSVSRLDTHQRPASRM. The HEAT 2 repeat unit spans residues 508–544; sequence VTFTTRILQHVSGACQDKNVQLRLFAAGWLKTLIQKQ. 5 disordered regions span residues 606-637, 651-847, 914-945, 984-1004, and 1031-1054; these read RSLL…ANGT, AAQK…STPR, LTEN…ESVP, PVTH…LSSS, and SLPH…PSQR. Polar residues-rich tracts occupy residues 691–705 and 735–747; these read VRTV…SLSS and ATDS…NQID. The segment covering 748-769 has biased composition (low complexity); that stretch reads GSPSAAKSKSSTPSLKSVSSTG. Composition is skewed to polar residues over residues 828 to 847 and 914 to 942; these read FSVT…STPR and LTEN…NQDE. The segment covering 995 to 1004 has biased composition (low complexity); the sequence is SSKPSGLSSS.

This sequence belongs to the CLASP family. As to quaternary structure, interacts with microtubules.

The protein localises to the cytoplasm. It is found in the cytoskeleton. It localises to the nucleus. Its subcellular location is the spindle. In terms of biological role, microtubule binding protein that promotes the stabilization of dynamic microtubules. Required for mitotic spindle formation. The protein is Protein stu1 (stu1) of Aspergillus fumigatus (strain ATCC MYA-4609 / CBS 101355 / FGSC A1100 / Af293) (Neosartorya fumigata).